A 1244-amino-acid polypeptide reads, in one-letter code: MDNCPPASTFLTDSLELELQTEWCNPPCFSCDFDNRGGGKHFSGESYLSSGALKRVILNLDPLPTNFEEDTVEIFGIEWVTETALVNSSRVLFHLFRQQLYNLETLLQASCDFGKISTLHCKAHNIRQLCVTFLHYVKVFIFRSLQVRNAESHVPVHPYETLEAQLPSVLVDELHGLLLYIGHLSELPTTNTGAFVNQNQTKLYPPSWHLLHLHLDIHWLVLEILHMLGEKLKQVVYSHQFMNLAGDNLTNVSLFEEHCENLLCDLINLSLNRYDKKVRPSEALMSHHCPCPCIKELWVLLIHLLNHRSKWSLSESFWNWLNKLLKTLLEKSNDQRRSVLIVQPRDPLGFSWWIITHVASFYQFDRHGTPDEMRQMESNWNFVEELLKKSISVQDGILEEQLRMYLHCCLTLCDFWEPNIAIVTILWEYYSKNLNSSFSISWLPLKGLTYIIKSPLSMLEMVKTCCCDKQDHDLYKSSSSYTIFLCILAKVVKKAMKNNGPHPWKQVKGRIYSKFHQKRMEELTEVGLQNFFSLFLLLAAVAEVEDVASHVLRLLDFLKPTFKTSPLIWKGQMAFLLMYTQKNLDIGVLAEKFSNAFREKAKEFLVSKNDEMGQRQTLWTLLSIYMDSVQEVFETSRCLHPSHEKLLNDGFSMLLRACQESELRTVLNFLQAVLARIRSLHQQLRQELQREHGDLSVQSSLSTKERHLAAVASALWRHFFSFLKSQRMSQIVPLSQLADAAADFTLLAMDLPSTAPSDLQPQPVTSMIQLFGWDDIIWPQVVARYLSHFLQNSMLCEALSHSGCVSFQALTVRSWIRCILQMYVKNLHVPDDSFIDINPEQAVEKDYMEQLTELTRLLFKLSEVKNIFSKSQVELPIPDDPKKALIRFFEAVGITYGNLQTVSDKSAMVTKSLEYLGEILKYIKPYLGKKVSSAGLQLTYTMMGTLVKSWALIFATSKAQKLLFRIIDCLLLPHTVLQQEKELPAPMLTAIQKSLPLYLQGMCIVCCQSQNTNAYLNQLLGNVIEQYIGRFLPASAHVLGLGQHPVLLALKNSASVPPMSLLKKCIVHVIRKSYFEFKGSLLPPRLASILAFILQLVKETNTDVSEIELLLPGVLKCLLLVSEPQVKRLATENLQCMVRACQVGSGGEPAAQLTSVFRQFIEDYGMRYDYQIYSILEAVAALDQQVVIHLVPTLTQSLKNSERKWGLGRNSAQREAYSKLLSQLGQVGQDEIQRLENDHIESML.

It belongs to the MMS22 family. MMS22L subfamily. As to quaternary structure, component of the MMS22L-TONSL complex, a complex at least composed of MMS22L and TONSL/NFKBIL2. Interacts with RAD51; interaction is direct. In terms of processing, degraded by the ubiquitin-proteasome system upon replication stress.

It localises to the nucleus. The protein resides in the chromosome. Its function is as follows. Component of the MMS22L-TONSL complex, a complex that promotes homologous recombination-mediated repair of double-strand breaks (DSBs) at stalled or collapsed replication forks. The MMS22L-TONSL complex is required to maintain genome integrity during DNA replication. It mediates the assembly of RAD51 filaments on single-stranded DNA (ssDNA): the MMS22L-TONSL complex is recruited to DSBs following histone replacement by histone chaperones and eviction of the replication protein A complex (RPA/RP-A) from DSBs. Following recruitment to DSBs, the TONSL-MMS22L complex promotes recruitment of RAD51 filaments and subsequent homologous recombination. Within the complex, MMS22L acts by binding ssDNA. This is Protein MMS22-like (MMS22L) from Bos taurus (Bovine).